Reading from the N-terminus, the 467-residue chain is Cytochrome P450 monooxygenase azaI (467 aa).

The N-terminal stretch at 1–28 (MESLAQLPGIFLPLAGCVLALSLSALLA) is a signal peptide. C411 is a binding site for heme.

The protein belongs to the cytochrome P450 family. The cofactor is heme.

Its pathway is secondary metabolite biosynthesis. Functionally, cytochrome P450 monooxygenase; part of the gene cluster that mediates the biosynthesis of azaphilones, a class of fungal metabolites characterized by a highly oxygenated pyrano-quinone bicyclic core and exhibiting a broad range of bioactivities. In the first step, the non-reducing polyketide synthase azaA forms the hexaketide precursor from successive condensations of five malonyl-CoA units, presumably with a simple acetyl-CoA starter unit. The reactive polyketide chain then undergoes a PT-mediated C2-C7 cyclization to afford the aromatic ring and is eventually released as an aldehyde through the R-domain. The putative ketoreductase azaE is proposed to catalyze the reduction of the terminal ketone resulting in the early culture product FK17-P2a. The monooxygenase azaH was demonstrated to be the only enzyme required to convert FK17-P2a to azanigerone E. AzaH first hydroxylates the benzaldehyde intermediate FK17-P2a at C4, which triggers the formation of the pyran-ring to afford azanigerone E. In parallel, the 2,4-dimethylhexanoyl chain is synthesized by the HR-PKS azaB and is proposed to be transferred to the C4-hydroxyl of azanigerone E by the acyltransferase azaD directly from the ACP domain of azaB. Alternatively, the 2,4-dimethyl-hexanoyl chain may be offloaded from the HR-PKS as a carboxylic acid and converted to an acyl-CoA by azaF. The resulting acyl-CoA molecule could then be taken up as a substrate by AzaD to form azanigerone B. To yield the carboxylic acid substituent in azanigerone A, the hydroxypropyl side chain of azanigerone B would need to undergo a C-C oxidative cleavage catalyzed by cytochrome P450 AzaI. AzaI is proposed to act on a vicinal diol that leads to a C-C bond scission either through an alkoxyradical intermediate or a peroxy complex. In the biosynthesis of azanigerone A, azanigerone B first undergoes hydroxylation at C10, possibly catalyzed by one of the two FAD-dependent monooxygenases encoded in the cluster, azaG or azaL, resulting in the vicinal diol azanigerone C. Oxidative cleavage of azanigerone C by azaI would yield the corresponding aldehyde derivative of azanigerone A. Finally, the dehydrogenase azaJ is proposed to convert the aldehyde functional group into the carboxylic acid, completing the conversion from azanigerone B to azanigerone A. Alternatively, the oxidation of aldehyde to carboxylic acid may be catalyzed by the same P450 enzyme azaI via consecutive oxidation or by endogenous alcohol dehydrogenase. This Aspergillus niger (strain ATCC 1015 / CBS 113.46 / FGSC A1144 / LSHB Ac4 / NCTC 3858a / NRRL 328 / USDA 3528.7) protein is Cytochrome P450 monooxygenase azaI.